The following is a 160-amino-acid chain: Phosphopantetheine adenylyltransferase (160 aa).

Thr11 provides a ligand contact to substrate. Residues 11–12 (TF) and His19 contribute to the ATP site. Residues Lys43, Thr75, and Arg89 each contribute to the substrate site. ATP-binding positions include 90 to 92 (GLR), Glu100, and 125 to 131 (YSFLSSS).

The protein belongs to the bacterial CoaD family. As to quaternary structure, homohexamer. Requires Mg(2+) as cofactor.

It is found in the cytoplasm. It catalyses the reaction (R)-4'-phosphopantetheine + ATP + H(+) = 3'-dephospho-CoA + diphosphate. It functions in the pathway cofactor biosynthesis; coenzyme A biosynthesis; CoA from (R)-pantothenate: step 4/5. Functionally, reversibly transfers an adenylyl group from ATP to 4'-phosphopantetheine, yielding dephospho-CoA (dPCoA) and pyrophosphate. The sequence is that of Phosphopantetheine adenylyltransferase from Listeria monocytogenes serotype 4b (strain CLIP80459).